Here is a 621-residue protein sequence, read N- to C-terminus: 1,4-alpha-glucan branching enzyme GlgB (621 aa).

Asp-302 acts as the Nucleophile in catalysis. Glu-355 (proton donor) is an active-site residue.

This sequence belongs to the glycosyl hydrolase 13 family. GlgB subfamily. As to quaternary structure, monomer.

It carries out the reaction Transfers a segment of a (1-&gt;4)-alpha-D-glucan chain to a primary hydroxy group in a similar glucan chain.. The protein operates within glycan biosynthesis; glycogen biosynthesis. Its function is as follows. Catalyzes the formation of the alpha-1,6-glucosidic linkages in glycogen by scission of a 1,4-alpha-linked oligosaccharide from growing alpha-1,4-glucan chains and the subsequent attachment of the oligosaccharide to the alpha-1,6 position. The sequence is that of 1,4-alpha-glucan branching enzyme GlgB from Dechloromonas aromatica (strain RCB).